A 392-amino-acid chain; its full sequence is Elongation factor Tu-3 (392 aa).

Residues K10–E206 enclose the tr-type G domain. Residues G19–T26 form a G1 region. GTP is bound at residue G19–T26. Residue T26 coordinates Mg(2+). Positions G63 to N67 are G2. Positions D84–G87 are G3. GTP is bound by residues D84–H88 and N139–D142. A G4 region spans residues N139 to D142. Residues S176–L178 are G5.

Belongs to the TRAFAC class translation factor GTPase superfamily. Classic translation factor GTPase family. EF-Tu/EF-1A subfamily. In terms of assembly, monomer.

The protein resides in the cytoplasm. The enzyme catalyses GTP + H2O = GDP + phosphate + H(+). Functionally, GTP hydrolase that promotes the GTP-dependent binding of aminoacyl-tRNA to the A-site of ribosomes during protein biosynthesis. This Streptomyces coelicolor (strain ATCC BAA-471 / A3(2) / M145) protein is Elongation factor Tu-3.